Here is a 481-residue protein sequence, read N- to C-terminus: GTPase Obg (481 aa).

Positions 2 to 159 constitute an Obg domain; the sequence is TTFVDRVVLH…LDAVLELKSV (158 aa). Positions 160–330 constitute an OBG-type G domain; the sequence is ADIGLVGYPS…LMFAMGELVA (171 aa). GTP is bound by residues 166-173, 191-195, 212-215, 282-285, and 311-313; these read GYPSAGKS, FTTLV, DVPG, NKID, and SAA. Mg(2+) contacts are provided by Ser173 and Thr193. Residues 348–426 form the OCT domain; sequence PKAVDDAGFT…IGEREFDWHP (79 aa). A disordered region spans residues 440–481; that stretch reads DQRLAEKTQRPSAAERLAARKARRQRPGDEPESDELDGDSGE. The span at 469–481 shows a compositional bias: acidic residues; the sequence is EPESDELDGDSGE.

It belongs to the TRAFAC class OBG-HflX-like GTPase superfamily. OBG GTPase family. In terms of assembly, monomer. Requires Mg(2+) as cofactor.

The protein localises to the cytoplasm. Functionally, an essential GTPase which binds GTP, GDP and possibly (p)ppGpp with moderate affinity, with high nucleotide exchange rates and a fairly low GTP hydrolysis rate. Plays a role in control of the cell cycle, stress response, ribosome biogenesis and in those bacteria that undergo differentiation, in morphogenesis control. This is GTPase Obg from Salinispora arenicola (strain CNS-205).